Reading from the N-terminus, the 75-residue chain is Exodeoxyribonuclease 7 small subunit (75 aa).

It belongs to the XseB family. As to quaternary structure, heterooligomer composed of large and small subunits.

The protein resides in the cytoplasm. The catalysed reaction is Exonucleolytic cleavage in either 5'- to 3'- or 3'- to 5'-direction to yield nucleoside 5'-phosphates.. Functionally, bidirectionally degrades single-stranded DNA into large acid-insoluble oligonucleotides, which are then degraded further into small acid-soluble oligonucleotides. This Nostoc punctiforme (strain ATCC 29133 / PCC 73102) protein is Exodeoxyribonuclease 7 small subunit.